A 320-amino-acid polypeptide reads, in one-letter code: Cytochrome f (320 aa).

Residues 1 to 35 (MQTRNTFSWIREEITRSISVSLMIYIITWASISSA) form the signal peptide. Heme-binding residues include Tyr-36, Cys-56, Cys-59, and His-60. A helical transmembrane segment spans residues 286–306 (VQGLLFFLGSVVLAQIFLVLK).

It belongs to the cytochrome f family. In terms of assembly, the 4 large subunits of the cytochrome b6-f complex are cytochrome b6, subunit IV (17 kDa polypeptide, petD), cytochrome f and the Rieske protein, while the 4 small subunits are PetG, PetL, PetM and PetN. The complex functions as a dimer. It depends on heme as a cofactor.

Its subcellular location is the plastid. The protein resides in the chloroplast thylakoid membrane. In terms of biological role, component of the cytochrome b6-f complex, which mediates electron transfer between photosystem II (PSII) and photosystem I (PSI), cyclic electron flow around PSI, and state transitions. The sequence is that of Cytochrome f from Lepidium virginicum (Virginia pepperweed).